The sequence spans 755 residues: Photosystem I P700 chlorophyll a apoprotein A1 (755 aa).

The next 8 membrane-spanning stretches (helical) occupy residues 72–95 (IFSA…YHGA), 158–181 (LLCT…FHYH), 197–221 (LNHH…HVAI), 297–315 (QAHH…GHMY), 352–375 (WHAQ…QHMY), 391–417 (ISLF…IYMV), 439–461 (AIIS…FYVH), and 536–554 (FMVH…LILL). [4Fe-4S] cluster is bound by residues C578 and C587. 2 helical membrane-spanning segments follow: residues 594–615 (HVFL…HFSW) and 669–691 (LSAY…MFLF). Residue H680 participates in chlorophyll a' binding. Positions 688 and 696 each coordinate chlorophyll a. Residue W697 participates in phylloquinone binding. The helical transmembrane segment at 729–749 (AVGVAHYLLGGIVTTWAFFLA) threads the bilayer.

Belongs to the PsaA/PsaB family. In terms of assembly, the PsaA/B heterodimer binds the P700 chlorophyll special pair and subsequent electron acceptors. PSI consists of a core antenna complex that captures photons, and an electron transfer chain that converts photonic excitation into a charge separation. The cyanobacterial PSI reaction center is composed of one copy each of PsaA,B,C,D,E,F,I,J,K,L,M and X, and forms trimeric complexes. PSI electron transfer chain: 5 chlorophyll a, 1 chlorophyll a', 2 phylloquinones and 3 4Fe-4S clusters. PSI core antenna: 90 chlorophyll a, 22 carotenoids, 3 phospholipids and 1 galactolipid. P700 is a chlorophyll a/chlorophyll a' dimer, A0 is one or more chlorophyll a, A1 is one or both phylloquinones and FX is a shared 4Fe-4S iron-sulfur center. is required as a cofactor.

The protein resides in the cellular thylakoid membrane. The catalysed reaction is reduced [plastocyanin] + hnu + oxidized [2Fe-2S]-[ferredoxin] = oxidized [plastocyanin] + reduced [2Fe-2S]-[ferredoxin]. In terms of biological role, psaA and PsaB bind P700, the primary electron donor of photosystem I (PSI), as well as the electron acceptors A0, A1 and FX. PSI is a plastocyanin/cytochrome c6-ferredoxin oxidoreductase, converting photonic excitation into a charge separation, which transfers an electron from the donor P700 chlorophyll pair to the spectroscopically characterized acceptors A0, A1, FX, FA and FB in turn. Oxidized P700 is reduced on the lumenal side of the thylakoid membrane by plastocyanin or cytochrome c6. The sequence is that of Photosystem I P700 chlorophyll a apoprotein A1 from Synechococcus sp. (strain JA-2-3B'a(2-13)) (Cyanobacteria bacterium Yellowstone B-Prime).